The following is a 1506-amino-acid chain: Transcriptional repressor NF-X1 homolog (1506 aa).

The segment covering 1 to 12 (MEESQNIPPKTQ) has biased composition (polar residues). 3 disordered regions span residues 1–123 (MEES…NNQL), 142–164 (LKSE…QEPT), and 181–282 (KAFV…KKDI). 2 stretches are compositionally biased toward low complexity: residues 13-103 (TLNN…SNSN) and 110-121 (HNNNYNNNNNNN). The span at 194 to 209 (NNTNNNNNNNNNNNNN) shows a compositional bias: low complexity. A compositionally biased stretch (basic and acidic residues) spans 217–232 (DNNRPQRERRERKPKE). Over residues 240 to 252 (PQQPQQPQQPQPQ) the composition is skewed to pro residues. The span at 253–263 (PQQQQQSQQQQ) shows a compositional bias: low complexity. Positions 267 to 282 (ENNRKKENKLQSKKDI) are enriched in basic and acidic residues. The segment at 363–416 (IYECMVCFENVGKNAVIWSCSQCFTMFHSSCIKQWSSKSVTTEGKWKCPGCRYN) adopts a PHD-type zinc-finger fold. Residues 366 to 414 (CMVCFENVGKNAVIWSCSQCFTMFHSSCIKQWSSKSVTTEGKWKCPGCR) form an RING-type; degenerate zinc finger. 7 consecutive NF-X1-type zinc fingers follow at residues 460-478 (CPHS…NCSS), 515-534 (CGNH…PCEV), 581-600 (CGNH…PCSL), 642-661 (CKQH…SCKV), 739-758 (CGVH…NCYI), 796-817 (CGHS…PCTY), and 852-868 (CLSH…PCLI). Disordered stretches follow at residues 897 to 1012 (QQSK…VDLN) and 1021 to 1040 (NEEE…DEDE). A compositionally biased stretch (low complexity) spans 903-921 (TTTTTTTTTTSTTSTTSPK). Residues 925–934 (KDEELIEDDN) show a composition bias toward acidic residues. Over residues 935-980 (NNNNNNNNNNNNNNNNNNNNNNNNNNNNNNNNNNNNNNNNNNNNNN) the composition is skewed to low complexity. Composition is skewed to basic and acidic residues over residues 981–1002 (EKAE…HSDD) and 1021–1031 (NEEEERIKKEE). An NF-X1-type 8 zinc finger spans residues 1062 to 1084 (CEHTCHQACHPGEPCPTNISCKQ). Disordered regions lie at residues 1132–1167 (SHTL…SSPT) and 1447–1473 (NQNQ…IKPT). Composition is skewed to low complexity over residues 1137–1167 (NNPN…SSPT) and 1447–1470 (NQNQ…NINI).

This sequence belongs to the NFX1 family.

It is found in the nucleus. Its function is as follows. May play a role in transcription regulation. In Dictyostelium discoideum (Social amoeba), this protein is Transcriptional repressor NF-X1 homolog (nfx1).